We begin with the raw amino-acid sequence, 313 residues long: Meiotically up-regulated gene 100 protein, mitochondrial (313 aa).

2 helical membrane-spanning segments follow: residues V147–G167 and S178–F198.

It is found in the mitochondrion inner membrane. Its function is as follows. Has a role in meiosis. The sequence is that of Meiotically up-regulated gene 100 protein, mitochondrial (mug100) from Schizosaccharomyces pombe (strain 972 / ATCC 24843) (Fission yeast).